Here is a 453-residue protein sequence, read N- to C-terminus: Ribosomal protein uS12 methylthiotransferase RimO (453 aa).

In terms of domain architecture, MTTase N-terminal spans 6-116 (PKVGFVSLGC…VMEAVHEALP (111 aa)). C15, C51, C80, C147, C151, and C154 together coordinate [4Fe-4S] cluster. The 238-residue stretch at 133–370 (LTPRHYAYLK…MEKQAQISAA (238 aa)) folds into the Radical SAM core domain. The 69-residue stretch at 373–441 (EAKIGTVQQC…DHDLYGDALP (69 aa)) folds into the TRAM domain.

The protein belongs to the methylthiotransferase family. RimO subfamily. Requires [4Fe-4S] cluster as cofactor.

It is found in the cytoplasm. It carries out the reaction L-aspartate(89)-[ribosomal protein uS12]-hydrogen + (sulfur carrier)-SH + AH2 + 2 S-adenosyl-L-methionine = 3-methylsulfanyl-L-aspartate(89)-[ribosomal protein uS12]-hydrogen + (sulfur carrier)-H + 5'-deoxyadenosine + L-methionine + A + S-adenosyl-L-homocysteine + 2 H(+). Catalyzes the methylthiolation of an aspartic acid residue of ribosomal protein uS12. The polypeptide is Ribosomal protein uS12 methylthiotransferase RimO (Stenotrophomonas maltophilia (strain R551-3)).